The chain runs to 611 residues: Chaperone protein HtpG (611 aa).

Residues 1-326 (MSETLERHAF…TEDLPLNVSR (326 aa)) are a; substrate-binding. Residues 327–536 (EMLQATPVLA…SGGPDLQMQR (210 aa)) are b. The tract at residues 537–611 (LLRRAGRGFG…RVATALAAQG (75 aa)) is c.

The protein belongs to the heat shock protein 90 family. In terms of assembly, homodimer.

The protein localises to the cytoplasm. Functionally, molecular chaperone. Has ATPase activity. The polypeptide is Chaperone protein HtpG (Methylobacterium nodulans (strain LMG 21967 / CNCM I-2342 / ORS 2060)).